The following is a 459-amino-acid chain: uncharacterized protein (459 aa).

A run of 2 helical transmembrane segments spans residues 53-75 and 111-133; these read IPLL…GLTL and ARIA…CLCA. Residues 174–196 form a disordered region; it reads HLDNPSAPHPSENPQSRAHPKQN.

It is found in the cell membrane. This is an uncharacterized protein from Treponema pallidum (strain Nichols).